The following is a 591-amino-acid chain: V-type ATP synthase alpha chain (591 aa).

242–249 is an ATP binding site; that stretch reads GPFGAGKT.

The protein belongs to the ATPase alpha/beta chains family.

It carries out the reaction ATP + H2O + 4 H(+)(in) = ADP + phosphate + 5 H(+)(out). Its function is as follows. Produces ATP from ADP in the presence of a proton gradient across the membrane. The V-type alpha chain is a catalytic subunit. The sequence is that of V-type ATP synthase alpha chain from Chlamydia trachomatis serovar L2 (strain ATCC VR-902B / DSM 19102 / 434/Bu).